The sequence spans 484 residues: Serine hydroxymethyltransferase, cytosolic (484 aa).

Ala2 carries the post-translational modification N-acetylalanine. Residue Asn6 is modified to Deamidated asparagine; alternate. The segment at residues 6–7 is a cross-link (isoaspartyl glycine isopeptide (Asn-Gly); alternate); that stretch reads NG. Residue Cys204 is the Nucleophile of the active site. His256 (proton donor) is an active-site residue. The residue at position 257 (Lys257) is an N6-(pyridoxal phosphate)lysine.

The protein belongs to the SHMT family. In terms of assembly, homotetramer. Identified in complex with ABRAXAS2 and the other subunits of the BRISC complex, at least composed of ABRAXAS2, BRCC3/BRCC36, BABAM2 and BABAM1/NBA1. It depends on pyridoxal 5'-phosphate as a cofactor. Deamidation of asparagine produces alternatively aspartate or isoaspartate, which in turn can be converted to aspartate through carboxylmethylation/demethylation.

It localises to the cytoplasm. It catalyses the reaction (6R)-5,10-methylene-5,6,7,8-tetrahydrofolate + glycine + H2O = (6S)-5,6,7,8-tetrahydrofolate + L-serine. It participates in one-carbon metabolism; tetrahydrofolate interconversion. In terms of biological role, interconversion of serine and glycine. This is Serine hydroxymethyltransferase, cytosolic (SHMT1) from Oryctolagus cuniculus (Rabbit).